The chain runs to 379 residues: Cytochrome b (379 aa).

Transmembrane regions (helical) follow at residues 33–53, 77–98, 113–133, and 178–198; these read FGSL…FLAM, WLIR…YLHI, WNIG…GYVL, and FFAF…IHLL. Residues His-83 and His-97 each contribute to the heme b site. Residues His-182 and His-196 each coordinate heme b. His-201 is an a ubiquinone binding site. The next 4 membrane-spanning stretches (helical) occupy residues 226–246, 288–308, 320–340, and 347–367; these read YKDL…ALFY, LGGV…PILH, ASQL…WIGG, and YIII…VLNP.

Belongs to the cytochrome b family. As to quaternary structure, the cytochrome bc1 complex contains 3 respiratory subunits (MT-CYB, CYC1 and UQCRFS1), 2 core proteins (UQCRC1 and UQCRC2) and probably 6 low-molecular weight proteins. Heme b serves as cofactor.

The protein resides in the mitochondrion inner membrane. Its function is as follows. Component of the ubiquinol-cytochrome c reductase complex (complex III or cytochrome b-c1 complex) that is part of the mitochondrial respiratory chain. The b-c1 complex mediates electron transfer from ubiquinol to cytochrome c. Contributes to the generation of a proton gradient across the mitochondrial membrane that is then used for ATP synthesis. The chain is Cytochrome b (mt-cyb) from Anguilla reinhardtii (Speckled longfin eel).